A 116-amino-acid chain; its full sequence is Nucleoid-associated protein SACE_0254 (116 aa).

Positions 90 to 116 (LQQEKMGPVTGALGGGQGLGGLGLPGL) are disordered. The span at 101 to 116 (ALGGGQGLGGLGLPGL) shows a compositional bias: gly residues.

The protein belongs to the YbaB/EbfC family. In terms of assembly, homodimer.

The protein localises to the cytoplasm. The protein resides in the nucleoid. Its function is as follows. Binds to DNA and alters its conformation. May be involved in regulation of gene expression, nucleoid organization and DNA protection. The chain is Nucleoid-associated protein SACE_0254 from Saccharopolyspora erythraea (strain ATCC 11635 / DSM 40517 / JCM 4748 / NBRC 13426 / NCIMB 8594 / NRRL 2338).